Consider the following 328-residue polypeptide: MIYQMQMPAKIEVDEATHTDRFGRFVAQPLERGYGVTLGNVMRRALLASLPGTAITGLKIDGVFHEFSTINGVREDVPEIVLNLKKVRFRSNCKRNCKTSLVLNGQKEFTAGDIIAQEGEFEVLNKDLHIATVNEGATLKIDIFVGRGRGYLPSEENRPDGMPIGFIAIDAIFTPIRNVKFTVENTRVGQRTDYEKMILDVETDGSITPDDSISLAGKIINEHVTFFADFSPTEEEFTEEEFKQQDDEFENMRKLFNTKIEDLDLSVRSHNCLRLAEIDTIGDLVSRKEDELLNYKNFGKKSLTELKEQLEKFDLKFGMDITKYQMKG.

The segment at 1-231 (MIYQMQMPAK…EHVTFFADFS (231 aa)) is alpha N-terminal domain (alpha-NTD). The alpha C-terminal domain (alpha-CTD) stretch occupies residues 252 to 328 (MRKLFNTKIE…MDITKYQMKG (77 aa)).

It belongs to the RNA polymerase alpha chain family. As to quaternary structure, homodimer. The RNAP catalytic core consists of 2 alpha, 1 beta, 1 beta' and 1 omega subunit. When a sigma factor is associated with the core the holoenzyme is formed, which can initiate transcription.

The catalysed reaction is RNA(n) + a ribonucleoside 5'-triphosphate = RNA(n+1) + diphosphate. Its function is as follows. DNA-dependent RNA polymerase catalyzes the transcription of DNA into RNA using the four ribonucleoside triphosphates as substrates. This is DNA-directed RNA polymerase subunit alpha from Chlorobium limicola (strain DSM 245 / NBRC 103803 / 6330).